The sequence spans 599 residues: MRNDFFIMDLKQKVENFPESTGVYIFYDHSGKVIYVGKAKNLRKRVLSYFNDDSPKSNYILKKAKNIEFYITDTETEALILESVLIKKYRPIMNVQLRDDKQYPMLKLTLYEEYPRLVLARRFEDDGARYYGPYTQSGTVRETISMVKKIFNLRSCNWNLPKSKPKRPCLNYFIGNCKAPCQNYITKEEYWEIVKGVIDFLDGKYEEIIEKLYDQMQEYSKNLEFEKAAKIRDKIRLLQNLSEKQKIVSFNRENKDLIQFYVEDHKAKALVYLIREGKLIEKRIFNLTLPEICSNDELIESFVLQYYSRGEIPEVIVVPSPFSEEEVNLKEFLCKRKGSEVVLRTPENEEEEKLLGMALKDLTIESIKSEKVWLALSELQRIFNLQNLPVSIEGYDISNLQGREAVGSRVYFQNGYPEKTKYRRYKIKYTPELPNDYLMLQEVIRRRLKNIEEDPLPDIMLIDGGKGQLSAVLEVFNELKIEPKFILALAKEKEEIFVPGRSEPILLSYDSPALHLLQQVRDEAHRFAVSYHRKLRSKKLMDSHLDKIPGVGEKRMKILLEAFSTLENLKKASLEDLKKVPGISEKIAEKIYLYFHDSS.

A GIY-YIG domain is found at 19–95; sequence ESTGVYIFYD…IKKYRPIMNV (77 aa). Residues 206 to 241 form the UVR domain; that stretch reads EEIIEKLYDQMQEYSKNLEFEKAAKIRDKIRLLQNL.

It belongs to the UvrC family. As to quaternary structure, interacts with UvrB in an incision complex.

The protein localises to the cytoplasm. Functionally, the UvrABC repair system catalyzes the recognition and processing of DNA lesions. UvrC both incises the 5' and 3' sides of the lesion. The N-terminal half is responsible for the 3' incision and the C-terminal half is responsible for the 5' incision. The polypeptide is UvrABC system protein C (Dictyoglomus thermophilum (strain ATCC 35947 / DSM 3960 / H-6-12)).